Reading from the N-terminus, the 296-residue chain is Claudin-23 (296 aa).

Residues 1–2 (MR) are Cytoplasmic-facing. The helical transmembrane segment at 3–23 (TPVVMTLGMVLTPCGLLLNLV) threads the bilayer. At 24–81 (STLAPGWRLVKGFLDQPVDVVLYQGLWDICREQSSRERECGQPDEWNYFQTQPVQVAR) the chain is on the extracellular side. Residues 82–102 (GLMITSLATTALGLLLASLGV) form a helical membrane-spanning segment. The Cytoplasmic segment spans residues 103–111 (RCWQDEPHY). The chain crosses the membrane as a helical span at residues 112–132 (GLAGLSGVVFFVAGLFSLIPV). Residues 133 to 160 (SWYNHFLSDPDVLAAPSSPVTVQVSYSL) are Extracellular-facing. A helical membrane pass occupies residues 161–181 (VLGYLGSCLLLLGGFSLALSF). The Cytoplasmic segment spans residues 182–296 (APWCEERCRR…QNSLPCDSDL (115 aa)). The interval 224–296 (YSDGQHRPPP…QNSLPCDSDL (73 aa)) is disordered. Low complexity predominate over residues 273–284 (TSQGGSSSRSTR). Over residues 285 to 296 (PCQNSLPCDSDL) the composition is skewed to polar residues.

Belongs to the claudin family.

Its subcellular location is the cell junction. It is found in the tight junction. It localises to the cell membrane. In terms of biological role, plays a major role in tight junction-specific obliteration of the intercellular space, through calcium-independent cell-adhesion activity. The polypeptide is Claudin-23 (Cldn23) (Mus musculus (Mouse)).